The sequence spans 351 residues: Photosystem II D2 protein 2 (351 aa).

The helical transmembrane segment at 39–59 (CAFLSIGGWFTGTTFVTSWYT) threads the bilayer. His116 is a binding site for chlorophyll a. A helical membrane pass occupies residues 123 to 139 (GFMLRQFEIARLVNVRP). Pheophytin a contacts are provided by Gln128 and Asn141. A helical transmembrane segment spans residues 151 to 164 (VFVSVFLMYPLGQS). Position 196 (His196) interacts with chlorophyll a. A helical transmembrane segment spans residues 206–226 (GALLCAIHGATVENTLFEDTK). A plastoquinone is bound by residues His213 and Phe260. His213 contributes to the Fe cation binding site. A Fe cation-binding site is contributed by His267. Residues 277 to 293 (GLWASAIGLVGIALNMR) form a helical membrane-spanning segment.

This sequence belongs to the reaction center PufL/M/PsbA/D family. In terms of assembly, PSII is composed of 1 copy each of membrane proteins PsbA, PsbB, PsbC, PsbD, PsbE, PsbF, PsbH, PsbI, PsbJ, PsbK, PsbL, PsbM, PsbT, PsbX, PsbY, PsbZ, Psb30/Ycf12, peripheral proteins PsbO, CyanoQ (PsbQ), PsbU, PsbV and a large number of cofactors. It forms dimeric complexes. It depends on The D1/D2 heterodimer binds P680, chlorophylls that are the primary electron donor of PSII, and subsequent electron acceptors. It shares a non-heme iron and each subunit binds pheophytin, quinone, additional chlorophylls, carotenoids and lipids. There is also a Cl(-1) ion associated with D1 and D2, which is required for oxygen evolution. The PSII complex binds additional chlorophylls, carotenoids and specific lipids. as a cofactor.

The protein localises to the cellular thylakoid membrane. It catalyses the reaction 2 a plastoquinone + 4 hnu + 2 H2O = 2 a plastoquinol + O2. In terms of biological role, photosystem II (PSII) is a light-driven water:plastoquinone oxidoreductase that uses light energy to abstract electrons from H(2)O, generating O(2) and a proton gradient subsequently used for ATP formation. It consists of a core antenna complex that captures photons, and an electron transfer chain that converts photonic excitation into a charge separation. The D1/D2 (PsbA/PsbD) reaction center heterodimer binds P680, the primary electron donor of PSII as well as several subsequent electron acceptors. D2 is needed for assembly of a stable PSII complex. This is Photosystem II D2 protein 2 from Acaryochloris marina (strain MBIC 11017).